The primary structure comprises 195 residues: MKNNFIIATHNIHKIKEIETILNFYRQHGEGYRKKLPQQAFPPESTVSYEENAKEKALFISQQLPAAKIIADDSGLELPAFPGRYGVQTARELAQEVPDGDLNDYLIHLVDGKSRQFIMKTTIALAINNQVVKIGHGQLKGTIAHAERGVNATGFDRIFIPAGESQTLAEMDQPTRISYLHRARAVKNLLDQLGE.

D73 serves as the catalytic Proton acceptor.

Belongs to the HAM1 NTPase family. Requires Mn(2+) as cofactor.

The enzyme catalyses 7,8-dihydroneopterin 3'-triphosphate + H2O = 7,8-dihydroneopterin 3'-phosphate + diphosphate + H(+). The protein operates within cofactor biosynthesis; tetrahydrofolate biosynthesis. Its function is as follows. Pyrophosphatase involved in the biosynthesis of tetrahydrofolate. Catalyzes the hydrolysis of dihydroneopterin triphosphate (DHNTP) to dihydroneopterin monophosphate (DHNMP) and pyrophosphate. Shows a strict substrate specificity. Has only weak activity with GTP, ITP, XTP and dTTP, and cannot use ATP, UTP, CTP, NAD(+), NADH, diadenosine triphosphate, diadenosine tetraphosphate, ADP-ribose and UDP-glucose. The protein is Dihydroneopterin triphosphate diphosphatase of Limosilactobacillus reuteri (strain DSM 20016) (Lactobacillus reuteri).